A 299-amino-acid polypeptide reads, in one-letter code: Glycine--tRNA ligase alpha subunit (299 aa).

The protein belongs to the class-II aminoacyl-tRNA synthetase family. In terms of assembly, tetramer of two alpha and two beta subunits.

It localises to the cytoplasm. The enzyme catalyses tRNA(Gly) + glycine + ATP = glycyl-tRNA(Gly) + AMP + diphosphate. The protein is Glycine--tRNA ligase alpha subunit of Dictyoglomus thermophilum (strain ATCC 35947 / DSM 3960 / H-6-12).